The chain runs to 183 residues: Negative modulator of initiation of replication (183 aa).

Positions 90–91 (AV) are interaction with DNA.

It belongs to the SeqA family. Homodimer. Polymerizes to form helical filaments.

The protein resides in the cytoplasm. In terms of biological role, negative regulator of replication initiation, which contributes to regulation of DNA replication and ensures that replication initiation occurs exactly once per chromosome per cell cycle. Binds to pairs of hemimethylated GATC sequences in the oriC region, thus preventing assembly of replication proteins and re-initiation at newly replicated origins. Repression is relieved when the region becomes fully methylated. In Shewanella oneidensis (strain ATCC 700550 / JCM 31522 / CIP 106686 / LMG 19005 / NCIMB 14063 / MR-1), this protein is Negative modulator of initiation of replication.